A 320-amino-acid polypeptide reads, in one-letter code: Methylenetetrahydrofolate dehydrogenase [NAD(+)] (320 aa).

Cys-150 is an active-site residue. NAD(+) is bound by residues 185–186, 208–209, and 274–276; these read RS, DV, and FAC.

This sequence belongs to the tetrahydrofolate dehydrogenase/cyclohydrolase family. In terms of assembly, homodimer. Post-translationally, the N-terminus is blocked.

The protein localises to the cytoplasm. It is found in the nucleus. The enzyme catalyses (6R)-5,10-methylene-5,6,7,8-tetrahydrofolate + NAD(+) = (6R)-5,10-methenyltetrahydrofolate + NADH. In terms of biological role, catalyzes oxidation of cytoplasmic one-carbon units for purine biosynthesis. This Saccharomyces cerevisiae (strain ATCC 204508 / S288c) (Baker's yeast) protein is Methylenetetrahydrofolate dehydrogenase [NAD(+)] (MTD1).